Reading from the N-terminus, the 268-residue chain is MNSEDAALDLLRRLNPKDISKNLDTILSVAPDLADVLLSSVDQPLKVNTCSESGNQYLLCDFNRDGDSYRSPWSNKYDPPLEDGLVSTDRVRKLEVSLNEAIRVYLDLYYEGGVSSVYLWDQDDSYAGAVLIKKASTSNSSGWDSIHVFECLPTTETNVYDYRLTSTIILFLSSGSEEQSALPSKALNLSGHLTRQTSQRLPAADDDTEIANVGKLVEEMETRMRNFLQDVYFGKTKDIINQTRSIQPVSDAQPNDSALRSVLNDLSI.

This sequence belongs to the F-actin-capping protein beta subunit family. As to quaternary structure, component of the F-actin capping complex, composed of a heterodimer of an alpha and a beta subunit.

It is found in the cytoplasm. The protein localises to the cytoskeleton. Its subcellular location is the actin patch. The protein resides in the nucleus. F-actin-capping proteins bind in a Ca(2+)-independent manner to the fast growing ends of actin filaments (barbed end) thereby blocking the exchange of subunits at these ends. Unlike other capping proteins (such as gelsolin and severin), these proteins do not sever actin filaments. Competes with formin cdc12 for attachment to the actin filaments barbed ends. Slowly replaces cdc12 on the barbed ends in preparation for filament disassembly during contractile ring constriction. The polypeptide is F-actin-capping protein subunit beta (acp2) (Schizosaccharomyces pombe (strain 972 / ATCC 24843) (Fission yeast)).